The following is a 1136-amino-acid chain: Carbamoyl phosphate synthase large chain (1136 aa).

The interval 1–402 (MPKRTDIKSV…SLGKAMRSID (402 aa)) is carboxyphosphate synthetic domain. ATP contacts are provided by Arg-129, Arg-169, Gly-175, Gly-176, Glu-208, Ile-210, Glu-215, Gly-241, Val-242, His-243, Gln-285, and Glu-299. Residues 133–328 (KKVVKEAGAE…IAKIATKLAL (196 aa)) enclose the ATP-grasp 1 domain. The Mg(2+) site is built by Gln-285, Glu-299, and Asn-301. Mn(2+)-binding residues include Gln-285, Glu-299, and Asn-301. Positions 403–551 (KRHMGFSWDG…YYYSCYADET (149 aa)) are oligomerization domain. Residues 552–962 (ELRKREREAV…AFAKSQLASY (411 aa)) form a carbamoyl phosphate synthetic domain region. Residues 681–881 (GEVLRQEHLN…LAKAAARIMA (201 aa)) enclose the ATP-grasp 2 domain. ATP is bound by residues Arg-717, Lys-765, Leu-767, Glu-772, Gly-797, Val-798, His-799, Ser-800, Gln-840, and Glu-852. Mg(2+) contacts are provided by Gln-840, Glu-852, and Asn-854. Mn(2+)-binding residues include Gln-840, Glu-852, and Asn-854. Residues 963 to 1136 (EGGLPTNGNV…KEEGEEARAQ (174 aa)) are allosteric domain. The region spanning 964–1122 (GGLPTNGNVF…QEHSRELYEL (159 aa)) is the MGS-like domain.

This sequence belongs to the CarB family. Composed of two chains; the small (or glutamine) chain promotes the hydrolysis of glutamine to ammonia, which is used by the large (or ammonia) chain to synthesize carbamoyl phosphate. Tetramer of heterodimers (alpha,beta)4. Requires Mg(2+) as cofactor. The cofactor is Mn(2+).

It catalyses the reaction hydrogencarbonate + L-glutamine + 2 ATP + H2O = carbamoyl phosphate + L-glutamate + 2 ADP + phosphate + 2 H(+). The catalysed reaction is hydrogencarbonate + NH4(+) + 2 ATP = carbamoyl phosphate + 2 ADP + phosphate + 2 H(+). It participates in amino-acid biosynthesis; L-arginine biosynthesis; carbamoyl phosphate from bicarbonate: step 1/1. It functions in the pathway pyrimidine metabolism; UMP biosynthesis via de novo pathway; (S)-dihydroorotate from bicarbonate: step 1/3. Large subunit of the glutamine-dependent carbamoyl phosphate synthetase (CPSase). CPSase catalyzes the formation of carbamoyl phosphate from the ammonia moiety of glutamine, carbonate, and phosphate donated by ATP, constituting the first step of 2 biosynthetic pathways, one leading to arginine and/or urea and the other to pyrimidine nucleotides. The large subunit (synthetase) binds the substrates ammonia (free or transferred from glutamine from the small subunit), hydrogencarbonate and ATP and carries out an ATP-coupled ligase reaction, activating hydrogencarbonate by forming carboxy phosphate which reacts with ammonia to form carbamoyl phosphate. The sequence is that of Carbamoyl phosphate synthase large chain from Bifidobacterium animalis subsp. lactis (strain AD011).